Reading from the N-terminus, the 420-residue chain is Putative movement protein (420 aa).

Low complexity-rich tracts occupy residues 1–18 and 30–59; these read MPLT…TSFS and TSCS…GSCP. Disordered stretches follow at residues 1–77, 137–181, 195–219, 235–281, 327–370, and 396–420; these read MPLT…TARP, SMSR…SARS, RPKT…STRT, IMSE…RPPP, PSAG…RPIQ, and LPPP…QPWP. Pro residues predominate over residues 60-69; that stretch reads KTPPGTPPLP. The segment covering 137–157 has biased composition (polar residues); it reads SMSRRATQPPTTRSRVRPSTG. The span at 158 to 181 shows a compositional bias: low complexity; sequence SRPPVSPLVTSSSPSPFSTLSARS. Residues 253 to 263 show a composition bias toward polar residues; that stretch reads GLRSASLSTAG. Positions 327–348 are enriched in low complexity; that stretch reads PSAGSSPFTPTVSGCSASTSSA.

Cell-to-cell movement. The sequence is that of Putative movement protein from Maize rayado fino virus (isolate Costa Rica/Guapiles) (MRFV).